The primary structure comprises 222 residues: Methionine import system permease protein MetP (222 aa).

Residues threonine 18–glycine 212 form the ABC transmembrane type-1 domain. 5 helical membrane passes run threonine 25–leucine 45, phenylalanine 73–glycine 93, alanine 97–leucine 117, isoleucine 152–isoleucine 172, and phenylalanine 195–isoleucine 215.

This sequence belongs to the binding-protein-dependent transport system permease family. CysTW subfamily. The complex is composed of two ATP-binding proteins (MetN), two transmembrane proteins (MetP) and a solute-binding protein (MetQ).

The protein localises to the cell membrane. Its function is as follows. Part of the ABC transporter complex MetNPQ involved in methionine import. Responsible for the translocation of the substrate across the membrane. It has also been shown to be involved in methionine sulfoxide transport. The sequence is that of Methionine import system permease protein MetP (metP) from Bacillus subtilis (strain 168).